We begin with the raw amino-acid sequence, 547 residues long: Glucose-6-phosphate isomerase (547 aa).

The Proton donor role is filled by Glu-351. Catalysis depends on residues His-382 and Lys-510.

It belongs to the GPI family.

The protein localises to the cytoplasm. It catalyses the reaction alpha-D-glucose 6-phosphate = beta-D-fructose 6-phosphate. Its pathway is carbohydrate biosynthesis; gluconeogenesis. The protein operates within carbohydrate degradation; glycolysis; D-glyceraldehyde 3-phosphate and glycerone phosphate from D-glucose: step 2/4. Functionally, catalyzes the reversible isomerization of glucose-6-phosphate to fructose-6-phosphate. This Saccharophagus degradans (strain 2-40 / ATCC 43961 / DSM 17024) protein is Glucose-6-phosphate isomerase.